The chain runs to 189 residues: Segregation and condensation protein B (189 aa).

This sequence belongs to the ScpB family. In terms of assembly, homodimer. Homodimerization may be required to stabilize the binding of ScpA to the Smc head domains. Component of a cohesin-like complex composed of ScpA, ScpB and the Smc homodimer, in which ScpA and ScpB bind to the head domain of Smc. The presence of the three proteins is required for the association of the complex with DNA.

The protein resides in the cytoplasm. Functionally, participates in chromosomal partition during cell division. May act via the formation of a condensin-like complex containing Smc and ScpA that pull DNA away from mid-cell into both cell halves. This is Segregation and condensation protein B from Streptococcus sanguinis (strain SK36).